A 101-amino-acid polypeptide reads, in one-letter code: MAKKGMINRELKREKTVAKYAVKRAELKATIANVNASDEERFEAMLKLQALPRNASPVRLRNRCGLTGRPHGYFRKFGLSRNKLRDTVMQGDVPGVVKASW.

The protein belongs to the universal ribosomal protein uS14 family. As to quaternary structure, part of the 30S ribosomal subunit. Contacts proteins S3 and S10.

Its function is as follows. Binds 16S rRNA, required for the assembly of 30S particles and may also be responsible for determining the conformation of the 16S rRNA at the A site. The sequence is that of Small ribosomal subunit protein uS14 from Acinetobacter baumannii (strain SDF).